The following is a 524-amino-acid chain: MTQPATTPRPVLVVDFGAQYAQLIARRVREASIYSEVVPHSATVKEIKAKNPAALILSGGPSSVYADGAPQLKPELLELGVPVFGICYGFQAMNHALGGNVAQTGDREYGRTEITHTGGVLHDGLEENHKVWMSHGDAVDKAPEGFTVTASSAGAPVAAMECVAKQMAGVQYHPEVMHSPHGQEVLVRFLTEVAGLEQTWTSANIAQQLIDDVRAQIGPEGRAICGLSGGVDSAVAAALVQRAIGDRLTCVFVDHGLLRAGEREQVEKDFVASTGAKLITAHEADAFLSKLAGVTDPEAKRKAIGAEFIRSFERAVAQALEESPEDSTVDFLVQGTLYPDVVESGGGDGTANIKSHHNVGGLPDDVEFELVEPLRLLFKDEVRAVGRELGLPEEIVARQPFPGPGLGIRIIGEVTEERLEILRQADLIARTELTNAGLDGDIWQCPVVLLADVRSVGVQGDGRTYGHPIVLRPVSSEDAMTADWTRVPYDVLEKISTRITNEVNDVNRVVVDITSKPPGTIEWE.

The 190-residue stretch at 10-199 folds into the Glutamine amidotransferase type-1 domain; sequence PVLVVDFGAQ…LTEVAGLEQT (190 aa). Cys-87 acts as the Nucleophile in catalysis. Catalysis depends on residues His-173 and Glu-175. Residues 200–398 form the GMPS ATP-PPase domain; sequence WTSANIAQQL…LGLPEEIVAR (199 aa). 228–234 contacts ATP; sequence SGGVDSA.

In terms of assembly, homodimer.

It catalyses the reaction XMP + L-glutamine + ATP + H2O = GMP + L-glutamate + AMP + diphosphate + 2 H(+). It functions in the pathway purine metabolism; GMP biosynthesis; GMP from XMP (L-Gln route): step 1/1. Its function is as follows. Catalyzes the synthesis of GMP from XMP. The polypeptide is GMP synthase [glutamine-hydrolyzing] (guaA) (Corynebacterium ammoniagenes (Brevibacterium ammoniagenes)).